We begin with the raw amino-acid sequence, 336 residues long: Holliday junction branch migration complex subunit RuvB (336 aa).

Residues 1-182 (MKERIVNLET…FGMSFRMQFY (182 aa)) form a large ATPase domain (RuvB-L) region. Residues Leu-21, Arg-22, Gly-63, Lys-66, Thr-67, Ser-68, 129–131 (EDF), Arg-172, Tyr-182, and Arg-219 contribute to the ATP site. Position 67 (Thr-67) interacts with Mg(2+). The segment at 183–253 (SPSELSLIIK…ITLHALNELG (71 aa)) is small ATPAse domain (RuvB-S). A head domain (RuvB-H) region spans residues 256–336 (ELGFDEADLA…IPTLNPQTLF (81 aa)). The DNA site is built by Arg-310 and Arg-315.

The protein belongs to the RuvB family. In terms of assembly, homohexamer. Forms an RuvA(8)-RuvB(12)-Holliday junction (HJ) complex. HJ DNA is sandwiched between 2 RuvA tetramers; dsDNA enters through RuvA and exits via RuvB. An RuvB hexamer assembles on each DNA strand where it exits the tetramer. Each RuvB hexamer is contacted by two RuvA subunits (via domain III) on 2 adjacent RuvB subunits; this complex drives branch migration. In the full resolvosome a probable DNA-RuvA(4)-RuvB(12)-RuvC(2) complex forms which resolves the HJ.

The protein resides in the cytoplasm. The catalysed reaction is ATP + H2O = ADP + phosphate + H(+). Functionally, the RuvA-RuvB-RuvC complex processes Holliday junction (HJ) DNA during genetic recombination and DNA repair, while the RuvA-RuvB complex plays an important role in the rescue of blocked DNA replication forks via replication fork reversal (RFR). RuvA specifically binds to HJ cruciform DNA, conferring on it an open structure. The RuvB hexamer acts as an ATP-dependent pump, pulling dsDNA into and through the RuvAB complex. RuvB forms 2 homohexamers on either side of HJ DNA bound by 1 or 2 RuvA tetramers; 4 subunits per hexamer contact DNA at a time. Coordinated motions by a converter formed by DNA-disengaged RuvB subunits stimulates ATP hydrolysis and nucleotide exchange. Immobilization of the converter enables RuvB to convert the ATP-contained energy into a lever motion, pulling 2 nucleotides of DNA out of the RuvA tetramer per ATP hydrolyzed, thus driving DNA branch migration. The RuvB motors rotate together with the DNA substrate, which together with the progressing nucleotide cycle form the mechanistic basis for DNA recombination by continuous HJ branch migration. Branch migration allows RuvC to scan DNA until it finds its consensus sequence, where it cleaves and resolves cruciform DNA. This chain is Holliday junction branch migration complex subunit RuvB, found in Helicobacter pylori (strain J99 / ATCC 700824) (Campylobacter pylori J99).